A 568-amino-acid chain; its full sequence is Type 3 secretion system secretin (568 aa).

A signal peptide spans 1–15 (MAAALLLWTAGTVCA). The disordered stretch occupies residues 203–292 (YGGDGPSDSG…RGSTPIIRAD (90 aa)). The segment covering 243-257 (LGGGKSPLPPGGTGQ) has biased composition (gly residues). Over residues 273–284 (NRLRSDELDDRG) the composition is skewed to basic and acidic residues.

Belongs to the bacterial secretin family. T3SS SctC subfamily. As to quaternary structure, the core secretion machinery of the T3SS is composed of approximately 20 different proteins, including cytoplasmic components, a base, an export apparatus and a needle. This subunit is part of the base, which anchors the injectisome in the bacterial cell envelope. Forms a stable homooligomeric complex.

Its subcellular location is the cell outer membrane. In terms of biological role, component of the type III secretion system (T3SS), also called injectisome, which is used to inject bacterial effector proteins into eukaryotic host cells. Forms a ring-shaped multimeric structure with an apparent central pore in the outer membrane. In Ralstonia nicotianae (strain ATCC BAA-1114 / GMI1000) (Ralstonia solanacearum), this protein is Type 3 secretion system secretin.